We begin with the raw amino-acid sequence, 362 residues long: 11-beta-hydroxysteroid dehydrogenase B (362 aa).

Residues 10 to 30 (FVVPPASLLMLAFTWPTLFFI) form a helical; Signal-anchor for type II membrane protein membrane-spanning segment. The Proline-knob signature appears at 13–26 (PPASLLMLAFTWPT). An NADP(+)-binding site is contributed by 55–81 (GASSGIGEQIAYQYAKRGANLVLVARR). Ser-185 provides a ligand contact to substrate. Tyr-198 (proton acceptor) is an active-site residue. Residues 198 to 202 (YSAAK) and Lys-202 each bind NADP(+). A disordered region spans residues 321 to 362 (TGRPLLETSSPRRSAVMEGSSPRRLPPGPLTFSPAFQQQKSE).

This sequence belongs to the short-chain dehydrogenases/reductases (SDR) family. As to expression, expressed in seeds (at protein level). Not expressed in stem, leaf or root (at protein level).

It is found in the lipid droplet. The protein localises to the membrane. It carries out the reaction an 11beta-hydroxysteroid + NADP(+) = an 11-oxosteroid + NADPH + H(+). It catalyses the reaction corticosterone + NADP(+) = 11-dehydrocorticosterone + NADPH + H(+). The enzyme catalyses 17beta-estradiol + NADP(+) = estrone + NADPH + H(+). Functionally, has dehydrogenase activity against corticosterone (11 beta-hydroxysteroid) and estradiol (17 beta-hydroxysteroid), with similar activities to both sterols in the presence of NADP(+), but negligible activity to either sterol in the presence of NAD(+). May be involved in signal transduction regulated by various sterols. The protein is 11-beta-hydroxysteroid dehydrogenase B of Sesamum indicum (Oriental sesame).